The following is a 131-amino-acid chain: D-ribose pyranase (131 aa).

The active-site Proton donor is His20. Residues Asp28, His98, and 120 to 122 contribute to the substrate site; that span reads YAN.

The protein belongs to the RbsD / FucU family. RbsD subfamily. As to quaternary structure, homodecamer.

The protein localises to the cytoplasm. The catalysed reaction is beta-D-ribopyranose = beta-D-ribofuranose. The protein operates within carbohydrate metabolism; D-ribose degradation; D-ribose 5-phosphate from beta-D-ribopyranose: step 1/2. In terms of biological role, catalyzes the interconversion of beta-pyran and beta-furan forms of D-ribose. The chain is D-ribose pyranase from Bacillus cereus (strain AH187).